Consider the following 254-residue polypeptide: HLA class II histocompatibility antigen, DR alpha chain (254 aa).

A signal peptide spans 1-25 (MAISGVPVLGFFIIAVLMSAQESWA). An alpha-1 region spans residues 26–109 (IKEEHVIIQA…KRSNYTPITN (84 aa)). The Extracellular segment spans residues 26–216 (IKEEHVIIQA…APSPLPETTE (191 aa)). N-linked (GlcNAc...) asparagine glycans are attached at residues N103 and N143. Residues 110–203 (VPPEVTVLTN…GLDEPLLKHW (94 aa)) form an alpha-2 region. Residues 112–204 (PEVTVLTNSP…LDEPLLKHWE (93 aa)) form the Ig-like C1-type domain. A disulfide bridge links C132 with C188. Residues 204–216 (EFDAPSPLPETTE) are connecting peptide. A helical membrane pass occupies residues 217–239 (NVVCALGLTVGLVGIIIGTIFII). Residues 240 to 254 (KGLRKSNAAERRGPL) are Cytoplasmic-facing. A Glycyl lysine isopeptide (Lys-Gly) (interchain with G-Cter in ubiquitin) cross-link involves residue K244.

Belongs to the MHC class II family. As to quaternary structure, heterotrimer that consists of an alpha chain HLA-DRA, a beta chain HLA-DRB and a peptide (peptide-MHCII). Newly synthesized alpha and beta chains forms a heterodimer (MHCII) that associates with the CD74/invariant chain (Ii) in the endoplasmic reticulum (ER). Ii is a trimer composed of three subunits and each subunit interacts with one MHCII dimer, blocking the peptide-binding cleft. As a result, MHCII molecules cannot bind peptides present in the ER. The complex of MHCII and CD74/Ii is transported in vesicles from ER to Golgi to lysosomes, where it encounters antigenic peptides generated via proteolysis of endocytosed antigens. MHCII dimers are dissociated from CD74/Ii by the combined action of proteolysis and HLA-DM. Lysosomal enzymes such as cathepsin, degrade CD74/Ii leaving a 24 amino acid remnant called class II-associated Ii or CLIP. Interacts (via the peptide binding cleft) with CLIP; this interaction inhibits antigen peptide binding before entry in the endosomal compartment. The displacement of CLIP and replacement by a high affinity peptide in lysosomes is performed by HLA-DM heterodimer. HLA-DM catalyzes CLIP dissociation from MHCII, stabilizes empty MHCII and mediates the selection of high affinity peptides. Interacts with HLA-DM heterodimer; this interaction is direct. Interacts (via alpha-1 domain) with TCR (via CDRs). Interacts (via alpha-2 domain) with CD4 (via Ig-like V-type domain); this interaction increases the affinity of TCR for peptide-MHCII. (Microbial infection) Interacts with Epstein-Barr virus BZLF2/gp42. In terms of assembly, (Microbial infection) Interacts with Staphylococcus aureus enterotoxin A/entA, enterotoxin B/entB, enterotoxin C1/entC1, enterotoxin D/entD, and enterotoxin H/entH. Ubiquitinated by MARCHF1 or MARCHF8 at Lys-244 leading to down-regulation of MHCII. When associated with ubiquitination of the beta chain at 'Lys-254', the down-regulation of MHCII may be highly effective. In terms of tissue distribution, expressed in professional APCs: macrophages, dendritic cells and B cells (at protein level). Expressed in thymic epithelial cells (at protein level).

The protein localises to the cell membrane. It localises to the endoplasmic reticulum membrane. The protein resides in the early endosome membrane. It is found in the late endosome membrane. Its subcellular location is the lysosome membrane. The protein localises to the autolysosome membrane. An alpha chain of antigen-presenting major histocompatibility complex class II (MHCII) molecule. In complex with the beta chain HLA-DRB, displays antigenic peptides on professional antigen presenting cells (APCs) for recognition by alpha-beta T cell receptor (TCR) on HLA-DR-restricted CD4-positive T cells. This guides antigen-specific T-helper effector functions, both antibody-mediated immune response and macrophage activation, to ultimately eliminate the infectious agents and transformed cells. Typically presents extracellular peptide antigens of 10 to 30 amino acids that arise from proteolysis of endocytosed antigens in lysosomes. In the tumor microenvironment, presents antigenic peptides that are primarily generated in tumor-resident APCs likely via phagocytosis of apoptotic tumor cells or macropinocytosis of secreted tumor proteins. Presents peptides derived from intracellular proteins that are trapped in autolysosomes after macroautophagy, a mechanism especially relevant for T cell selection in the thymus and central immune tolerance. The selection of the immunodominant epitopes follows two processing modes: 'bind first, cut/trim later' for pathogen-derived antigenic peptides and 'cut first, bind later' for autoantigens/self-peptides. The anchor residue at position 1 of the peptide N-terminus, usually a large hydrophobic residue, is essential for high affinity interaction with MHCII molecules. The chain is HLA class II histocompatibility antigen, DR alpha chain (HLA-DRA) from Homo sapiens (Human).